The sequence spans 509 residues: Sulfoacetate--CoA ligase (509 aa).

The segment at 320–340 (AFSNPLDPGQRRIGSIGRPSG) is disordered.

It belongs to the ATP-dependent AMP-binding enzyme family.

It localises to the cytoplasm. The enzyme catalyses sulfoacetate + ATP + CoA = sulfoacetyl-CoA + AMP + diphosphate. In terms of biological role, involved in the degradation of sulfoacetate, a widespread natural product. Catalyzes the CoA- and ATP-dependent conversion of sulfoacetate to sulfoacetyl-CoA and AMP. The chain is Sulfoacetate--CoA ligase from Cupriavidus necator (strain ATCC 17699 / DSM 428 / KCTC 22496 / NCIMB 10442 / H16 / Stanier 337) (Ralstonia eutropha).